The chain runs to 416 residues: Transcription factor PIL1 (416 aa).

Disordered regions lie at residues 1–24, 89–113, and 197–231; these read MEAKPLASSSSEPNMISPSSNIKP, VSQSKPQQDKETNEQMNNNKKKLKS, and ESTYLSNNSDDESDDAKTQVHARTRKPVTKRKRST. The span at 8 to 22 shows a compositional bias: low complexity; that stretch reads SSSSEPNMISPSSNI. The stretch at 95-124 forms a coiled coil; sequence QQDKETNEQMNNNKKKLKSSKIEFERNVSK. Over residues 216–229 the composition is skewed to basic residues; the sequence is VHARTRKPVTKRKR. The region spanning 229 to 278 is the bHLH domain; that stretch reads RSTEVHKLYERKRRDEFNKKMRALQDLLPNCYKDDKASLLDEAIKYMRTL.

In terms of assembly, homodimer. Interacts with APRR1/TOC1. Associates to PTAC12/HMR/PAP5 which acts as a transcriptional coactivator. Mainly expressed in stems, fruits and flowers and, to a lower extent, in leaves, seedlings and roots. Accumulates in etiolated seedlings.

The protein localises to the nucleus. In terms of biological role, transcription factor. Involved in responses to transient and long-term shade. Required for the light-mediated inhibition of hypocotyl elongation. Necessary for rapid light-induced expression of the photomorphogenesis- and circadian-related gene APRR9. Seems to play a role in multiple PHYB responses, such as flowering transition and petiole elongation. The chain is Transcription factor PIL1 from Arabidopsis thaliana (Mouse-ear cress).